The sequence spans 384 residues: Tryptophan--tRNA ligase (384 aa).

Residues 81–89 carry the 'HIGH' region motif; that stretch reads PSGPMHIGH. The short motif at 252 to 256 is the 'KMSKS' region element; sequence KMSAS.

It belongs to the class-I aminoacyl-tRNA synthetase family.

Its subcellular location is the cytoplasm. It carries out the reaction tRNA(Trp) + L-tryptophan + ATP = L-tryptophyl-tRNA(Trp) + AMP + diphosphate + H(+). In Thermococcus kodakarensis (strain ATCC BAA-918 / JCM 12380 / KOD1) (Pyrococcus kodakaraensis (strain KOD1)), this protein is Tryptophan--tRNA ligase.